The sequence spans 292 residues: Phosphatidylglycerol--prolipoprotein diacylglyceryl transferase (292 aa).

The next 4 helical transmembrane spans lie at 24-44 (ISVH…LLIA), 65-85 (FFIW…VLIY), 110-130 (GISG…AIIF), and 136-156 (QSFW…YVFG). Arg-157 is an a 1,2-diacyl-sn-glycero-3-phospho-(1'-sn-glycerol) binding site. The next 3 helical transmembrane spans lie at 192–212 (SQLF…ICLL), 219–239 (GTLL…CEYF), and 256–276 (GQIL…FVFV).

This sequence belongs to the Lgt family.

It is found in the cell inner membrane. The catalysed reaction is L-cysteinyl-[prolipoprotein] + a 1,2-diacyl-sn-glycero-3-phospho-(1'-sn-glycerol) = an S-1,2-diacyl-sn-glyceryl-L-cysteinyl-[prolipoprotein] + sn-glycerol 1-phosphate + H(+). It participates in protein modification; lipoprotein biosynthesis (diacylglyceryl transfer). Its function is as follows. Catalyzes the transfer of the diacylglyceryl group from phosphatidylglycerol to the sulfhydryl group of the N-terminal cysteine of a prolipoprotein, the first step in the formation of mature lipoproteins. In Helicobacter hepaticus (strain ATCC 51449 / 3B1), this protein is Phosphatidylglycerol--prolipoprotein diacylglyceryl transferase.